Reading from the N-terminus, the 233-residue chain is MSDNLTELSQQLHDASEKKQLTAIAALAEMGEGGQGILLDYLAKNVPLEKPVLAVGNVYQTLRNLEQETITTQLQRNYPTGIFPLQSAQGIDYLPLQEALGSQDFETADEITRDKLCELAGPGASQRQWLYFTEVEKFPALDLHTINALWWLHSNGNFGFSVQRRLWLASGKEFTKLWPKIGWKSGNVWTRWPKGFTWDLSAPQGHLPLLNQLRGVRVAESLYRHPVWSQYGW.

Belongs to the ycf53 family.

The protein is Ycf53-like protein of Synechocystis sp. (strain ATCC 27184 / PCC 6803 / Kazusa).